A 120-amino-acid polypeptide reads, in one-letter code: NAD(P)H-quinone oxidoreductase subunit 3 (120 aa).

A run of 3 helical transmembrane segments spans residues 1–21 (MFVL…SLVP), 64–84 (MFAL…PWAV), and 89–109 (LGLL…VALV).

Belongs to the complex I subunit 3 family. NDH-1 can be composed of about 15 different subunits; different subcomplexes with different compositions have been identified which probably have different functions.

It localises to the cellular thylakoid membrane. The catalysed reaction is a plastoquinone + NADH + (n+1) H(+)(in) = a plastoquinol + NAD(+) + n H(+)(out). It carries out the reaction a plastoquinone + NADPH + (n+1) H(+)(in) = a plastoquinol + NADP(+) + n H(+)(out). NDH-1 shuttles electrons from an unknown electron donor, via FMN and iron-sulfur (Fe-S) centers, to quinones in the respiratory and/or the photosynthetic chain. The immediate electron acceptor for the enzyme in this species is believed to be plastoquinone. Couples the redox reaction to proton translocation, and thus conserves the redox energy in a proton gradient. Cyanobacterial NDH-1 also plays a role in inorganic carbon-concentration. The chain is NAD(P)H-quinone oxidoreductase subunit 3 from Trichormus variabilis (strain ATCC 29413 / PCC 7937) (Anabaena variabilis).